The primary structure comprises 158 residues: Endoribonuclease YbeY (158 aa).

The Zn(2+) site is built by His119, His123, and Asp129.

This sequence belongs to the endoribonuclease YbeY family. It depends on Zn(2+) as a cofactor.

It is found in the cytoplasm. In terms of biological role, single strand-specific metallo-endoribonuclease involved in late-stage 70S ribosome quality control and in maturation of the 3' terminus of the 16S rRNA. The protein is Endoribonuclease YbeY of Chlamydia pneumoniae (Chlamydophila pneumoniae).